A 215-amino-acid chain; its full sequence is [PSI+] inducibility protein 3 (215 aa).

The residue at position 2 (Ser-2) is an N-acetylserine. Ser-52 and Ser-55 each carry phosphoserine. In terms of domain architecture, SH3 spans 54 to 113 (ASLEYVEALYQFDPQQDGDLGLKPGDKVQLLEKLSPEWYKGSCNGRTGIFPANYVKPAFS). Lys-80 participates in a covalent cross-link: Glycyl lysine isopeptide (Lys-Gly) (interchain with G-Cter in ubiquitin). The tract at residues 114 to 189 (GSNGPSNLPP…HQSSHSHLKS (76 aa)) is disordered. Residues 124–127 (PPQY) carry the PY motif motif.

This sequence belongs to the LSB1 family. Interacts with LAS17, RSP5 and SUP35. In terms of processing, ubiquitinated by RSP5. Ubiquitination reduces the protein abundance and its prion-inducing ability.

It localises to the cytoplasm. The protein resides in the nucleus. Its subcellular location is the cytoskeleton. It is found in the actin patch. Functionally, overproduction promotes the de novo induction of the [PSI+] prion form of SUP35. The prion-inducing effect depends on the association with the actin cytoskeleton. Also implicated in prion maintenance during heat stress. This Saccharomyces cerevisiae (strain ATCC 204508 / S288c) (Baker's yeast) protein is [PSI+] inducibility protein 3 (PIN3).